The following is a 75-amino-acid chain: Putative defensin-like protein 126 (75 aa).

The first 24 residues, 1–24 (MSKSTFLFVYIILILGSMVNEIQG), serve as a signal peptide directing secretion. 4 disulfide bridges follow: C29–C73, C38–C57, C43–C67, and C47–C69.

It belongs to the DEFL family.

The protein localises to the secreted. This is Putative defensin-like protein 126 (LCR6) from Arabidopsis thaliana (Mouse-ear cress).